Here is a 385-residue protein sequence, read N- to C-terminus: Nonsense-mediated mRNA decay factor SMG9 (385 aa).

Residues 1–32 form a disordered region; it reads MKKVEILKTSRPSSAGGAARPSTASPTHGAPK.

This sequence belongs to the SMG9 family.

In terms of biological role, involved in nonsense-mediated decay (NMD) of mRNAs containing premature stop codons. Probable component of kinase complex containing smg-1 and recruited to stalled ribosomes. This is Nonsense-mediated mRNA decay factor SMG9 (smg-9) from Caenorhabditis elegans.